The chain runs to 451 residues: Bifunctional protein GlmU (451 aa).

Positions 1-225 are pyrophosphorylase; that stretch reads MVVVAILAAG…YQEILGINDR (225 aa). Residues 7-10, lysine 21, glutamine 72, and 77-78 each bind UDP-N-acetyl-alpha-D-glucosamine; these read LAAG and GT. Residue aspartate 102 participates in Mg(2+) binding. Glycine 139, glutamate 154, asparagine 169, and asparagine 223 together coordinate UDP-N-acetyl-alpha-D-glucosamine. Asparagine 223 lines the Mg(2+) pocket. Positions 226–246 are linker; it reads LQLATAYEILQRRVKEQWMMA. Positions 247 to 451 are N-acetyltransferase; sequence GVTLIDPNSI…PGWRKKSGES (205 aa). The UDP-N-acetyl-alpha-D-glucosamine site is built by arginine 328 and lysine 346. The Proton acceptor role is filled by histidine 358. UDP-N-acetyl-alpha-D-glucosamine contacts are provided by tyrosine 361 and asparagine 372. Acetyl-CoA is bound by residues alanine 375, 381–382, serine 400, alanine 418, and arginine 435; that span reads NY.

The protein in the N-terminal section; belongs to the N-acetylglucosamine-1-phosphate uridyltransferase family. This sequence in the C-terminal section; belongs to the transferase hexapeptide repeat family. Homotrimer. The cofactor is Mg(2+).

It is found in the cytoplasm. The catalysed reaction is alpha-D-glucosamine 1-phosphate + acetyl-CoA = N-acetyl-alpha-D-glucosamine 1-phosphate + CoA + H(+). It catalyses the reaction N-acetyl-alpha-D-glucosamine 1-phosphate + UTP + H(+) = UDP-N-acetyl-alpha-D-glucosamine + diphosphate. The protein operates within nucleotide-sugar biosynthesis; UDP-N-acetyl-alpha-D-glucosamine biosynthesis; N-acetyl-alpha-D-glucosamine 1-phosphate from alpha-D-glucosamine 6-phosphate (route II): step 2/2. Its pathway is nucleotide-sugar biosynthesis; UDP-N-acetyl-alpha-D-glucosamine biosynthesis; UDP-N-acetyl-alpha-D-glucosamine from N-acetyl-alpha-D-glucosamine 1-phosphate: step 1/1. It participates in bacterial outer membrane biogenesis; LPS lipid A biosynthesis. In terms of biological role, catalyzes the last two sequential reactions in the de novo biosynthetic pathway for UDP-N-acetylglucosamine (UDP-GlcNAc). The C-terminal domain catalyzes the transfer of acetyl group from acetyl coenzyme A to glucosamine-1-phosphate (GlcN-1-P) to produce N-acetylglucosamine-1-phosphate (GlcNAc-1-P), which is converted into UDP-GlcNAc by the transfer of uridine 5-monophosphate (from uridine 5-triphosphate), a reaction catalyzed by the N-terminal domain. This chain is Bifunctional protein GlmU, found in Trichormus variabilis (strain ATCC 29413 / PCC 7937) (Anabaena variabilis).